The chain runs to 489 residues: Acetyl-coenzyme A carboxylase carboxyl transferase subunit beta, chloroplastic (489 aa).

The region spanning 225–489 is the CoA carboxyltransferase N-terminal domain; the sequence is LWIQCDNCYG…FFPLNKNEIK (265 aa). Cysteine 229, cysteine 232, cysteine 245, and cysteine 248 together coordinate Zn(2+). The C4-type zinc-finger motif lies at 229–248; the sequence is CDNCYGLKYKKVEMNVCEEC.

This sequence belongs to the AccD/PCCB family. As to quaternary structure, acetyl-CoA carboxylase is a heterohexamer composed of biotin carboxyl carrier protein, biotin carboxylase and 2 subunits each of ACCase subunit alpha and ACCase plastid-coded subunit beta (accD). The cofactor is Zn(2+).

It is found in the plastid. The protein localises to the chloroplast stroma. The enzyme catalyses N(6)-carboxybiotinyl-L-lysyl-[protein] + acetyl-CoA = N(6)-biotinyl-L-lysyl-[protein] + malonyl-CoA. It functions in the pathway lipid metabolism; malonyl-CoA biosynthesis; malonyl-CoA from acetyl-CoA: step 1/1. Its function is as follows. Component of the acetyl coenzyme A carboxylase (ACC) complex. Biotin carboxylase (BC) catalyzes the carboxylation of biotin on its carrier protein (BCCP) and then the CO(2) group is transferred by the transcarboxylase to acetyl-CoA to form malonyl-CoA. In Brassica napus (Rape), this protein is Acetyl-coenzyme A carboxylase carboxyl transferase subunit beta, chloroplastic.